Consider the following 619-residue polypeptide: MVSGPLALRWCPWAGHRDMGPDMELPSHSKQLLLQLNQQRAKGFLCDVIIMVENSIFRAHKNVLAASSIYFKSLVLHDNLINLDTDMVSSTVFQQILDFIYTGKLLPSDQPSEPNFSTLLTAASYLQLPELAALCRRKLKRAGKPFGPGRVGTAGIGRPTRSQRLSTASVIQARFPGLVDVRKGHPAPQELPQAKGSDDELFLGTSTQESTHGLGLGGPAGGEMGLGGCSTSTNGSSGGCEQELGLDLSKKSPPLPPTTPGPHLTPEDPAQLSDSQRESPAPTSTSALPVGNSASFVELGATPEEPMDVEGAEENHLSLLEGQGGQPRKSLRHSARKKDWNKKEPVAGSPFDRRETGSKGSCPGEEGEGTGDRVPNGVLASSAGGGGPSASYGEQSFPCKEEEENGKDGSEDSGQSGSEGGSGHTGAHYVYRQEGYETVSYGDNVYVCIPCAKGFPSSEQLNAHVETHTEEELFIKEEGAYETGSGGAEEEAEDLSTPSAAYTADSRPFKCSVCEKTYKDPATLRQHEKTHWLTRPFPCNICGKMFTQRGTMTRHMRSHLGLKPFACDECGMRFTRQYRLTEHMRVHSGEKPYECQLCGGKFTQQRNLISHLRMHTSPS.

Residues 46-109 enclose the BTB domain; that stretch reads CDVIIMVENS…IYTGKLLPSD (64 aa). Phosphoserine is present on residues serine 166, serine 169, and serine 197. Disordered stretches follow at residues 180-293 and 307-426; these read DVRK…VGNS and MDVE…GHTG. The segment covering 214–228 has biased composition (gly residues); the sequence is LGLGGPAGGEMGLGG. The binding to CtBP stretch occupies residues 247–249; the sequence is DLS. Residues 281–293 are compositionally biased toward polar residues; it reads APTSTSALPVGNS. Over residues 337-357 the composition is skewed to basic and acidic residues; that stretch reads KKDWNKKEPVAGSPFDRRETG. Residues serine 349 and serine 416 each carry the phosphoserine modification. 5 consecutive C2H2-type zinc fingers follow at residues 446–468, 509–531, 537–559, 565–587, and 593–615; these read YVCI…VETH, FKCS…EKTH, FPCN…MRSH, FACD…MRVH, and YECQ…LRMH.

Belongs to the krueppel C2H2-type zinc-finger protein family. Hic subfamily. As to quaternary structure, self-associates. Interacts with HIC1.

The protein resides in the nucleus. In terms of biological role, transcriptional repressor. The protein is Hypermethylated in cancer 2 protein (Hic2) of Mus musculus (Mouse).